The sequence spans 118 residues: MARVKRGVVAHAKHKKVLEQAKGFYGRRKNTIRTAKAAVDKAGQYAYRDRKVRKRAFRSLWIQRINAGARLEGFTYSQFIHGLDVAGIVMDRKVLADIAGNDPAAFKAIADKVRAALA.

This sequence belongs to the bacterial ribosomal protein bL20 family.

Its function is as follows. Binds directly to 23S ribosomal RNA and is necessary for the in vitro assembly process of the 50S ribosomal subunit. It is not involved in the protein synthesizing functions of that subunit. This Caulobacter vibrioides (strain ATCC 19089 / CIP 103742 / CB 15) (Caulobacter crescentus) protein is Large ribosomal subunit protein bL20.